We begin with the raw amino-acid sequence, 110 residues long: T cell receptor alpha variable 39 (110 aa).

The N-terminal stretch at 1-18 is a signal peptide; it reads MKKLLAMILWLQLDRLSG. The Ig-like domain maps to 19 to 110; that stretch reads ELKVEQNPLF…LSATYFCAVD (92 aa). 2 N-linked (GlcNAc...) asparagine glycosylation sites follow: N36 and N42. C41 and C107 are oxidised to a cystine.

Alpha-beta TR is a heterodimer composed of an alpha and beta chain; disulfide-linked. The alpha-beta TR is associated with the transmembrane signaling CD3 coreceptor proteins to form the TR-CD3 (TcR or TCR). The assembly of alpha-beta TR heterodimers with CD3 occurs in the endoplasmic reticulum where a single alpha-beta TR heterodimer associates with one CD3D-CD3E heterodimer, one CD3G-CD3E heterodimer and one CD247 homodimer forming a stable octameric structure. CD3D-CD3E and CD3G-CD3E heterodimers preferentially associate with TR alpha and TR beta chains, respectively. The association of the CD247 homodimer is the last step of TcR assembly in the endoplasmic reticulum and is required for transport to the cell surface.

It localises to the cell membrane. Its function is as follows. V region of the variable domain of T cell receptor (TR) alpha chain that participates in the antigen recognition. Alpha-beta T cell receptors are antigen specific receptors which are essential to the immune response and are present on the cell surface of T lymphocytes. Recognize peptide-major histocompatibility (MH) (pMH) complexes that are displayed by antigen presenting cells (APC), a prerequisite for efficient T cell adaptive immunity against pathogens. Binding of alpha-beta TR to pMH complex initiates TR-CD3 clustering on the cell surface and intracellular activation of LCK that phosphorylates the ITAM motifs of CD3G, CD3D, CD3E and CD247 enabling the recruitment of ZAP70. In turn ZAP70 phosphorylates LAT, which recruits numerous signaling molecules to form the LAT signalosome. The LAT signalosome propagates signal branching to three major signaling pathways, the calcium, the mitogen-activated protein kinase (MAPK) kinase and the nuclear factor NF-kappa-B (NF-kB) pathways, leading to the mobilization of transcription factors that are critical for gene expression and essential for T cell growth and differentiation. The T cell repertoire is generated in the thymus, by V-(D)-J rearrangement. This repertoire is then shaped by intrathymic selection events to generate a peripheral T cell pool of self-MH restricted, non-autoaggressive T cells. Post-thymic interaction of alpha-beta TR with the pMH complexes shapes TR structural and functional avidity. This Homo sapiens (Human) protein is T cell receptor alpha variable 39.